The chain runs to 61 residues: Large ribosomal subunit protein uL30 (61 aa).

It belongs to the universal ribosomal protein uL30 family. In terms of assembly, part of the 50S ribosomal subunit.

The sequence is that of Large ribosomal subunit protein uL30 from Exiguobacterium sp. (strain ATCC BAA-1283 / AT1b).